A 1368-amino-acid polypeptide reads, in one-letter code: DNA-directed RNA polymerase subunit beta (1368 aa).

The protein belongs to the RNA polymerase beta chain family. As to quaternary structure, the RNAP catalytic core consists of 2 alpha, 1 beta, 1 beta' and 1 omega subunit. When a sigma factor is associated with the core the holoenzyme is formed, which can initiate transcription.

The enzyme catalyses RNA(n) + a ribonucleoside 5'-triphosphate = RNA(n+1) + diphosphate. DNA-dependent RNA polymerase catalyzes the transcription of DNA into RNA using the four ribonucleoside triphosphates as substrates. This Paraburkholderia xenovorans (strain LB400) protein is DNA-directed RNA polymerase subunit beta.